We begin with the raw amino-acid sequence, 311 residues long: Aspartate carbamoyltransferase catalytic subunit (311 aa).

Residues R58 and T59 each contribute to the carbamoyl phosphate site. K86 contacts L-aspartate. Carbamoyl phosphate-binding residues include R108, H136, and Q139. L-aspartate contacts are provided by R169 and R223. Carbamoyl phosphate contacts are provided by G264 and P265.

Belongs to the aspartate/ornithine carbamoyltransferase superfamily. ATCase family. As to quaternary structure, heterododecamer (2C3:3R2) of six catalytic PyrB chains organized as two trimers (C3), and six regulatory PyrI chains organized as three dimers (R2).

It carries out the reaction carbamoyl phosphate + L-aspartate = N-carbamoyl-L-aspartate + phosphate + H(+). It functions in the pathway pyrimidine metabolism; UMP biosynthesis via de novo pathway; (S)-dihydroorotate from bicarbonate: step 2/3. In terms of biological role, catalyzes the condensation of carbamoyl phosphate and aspartate to form carbamoyl aspartate and inorganic phosphate, the committed step in the de novo pyrimidine nucleotide biosynthesis pathway. This chain is Aspartate carbamoyltransferase catalytic subunit, found in Ruegeria pomeroyi (strain ATCC 700808 / DSM 15171 / DSS-3) (Silicibacter pomeroyi).